Consider the following 305-residue polypeptide: J domain-containing protein 1 (305 aa).

The J domain maps to 91–163 (TPYEVLGLVK…SRRRMYDMYA (73 aa)). The chain crosses the membrane as a helical span at residues 212–232 (WGMVVWALCMLAGFQVMAFLI).

It belongs to the DnaJ family.

The protein localises to the mitochondrion membrane. Functionally, probable chaperone. In Eremothecium gossypii (strain ATCC 10895 / CBS 109.51 / FGSC 9923 / NRRL Y-1056) (Yeast), this protein is J domain-containing protein 1 (JID1).